A 64-amino-acid polypeptide reads, in one-letter code: Large ribosomal subunit protein bL35 (64 aa).

Disordered regions lie at residues 1-20 (MPKAKTHSGASKRFRRTGTG) and 37-64 (PTKRTRRLAGRTQVSANDAPRINKMLNG).

This sequence belongs to the bacterial ribosomal protein bL35 family.

The chain is Large ribosomal subunit protein bL35 from Mycobacterium sp. (strain JLS).